The following is a 210-amino-acid chain: Calaxin (210 aa).

EF-hand domains lie at 64-99 (TDDM…FLRG), 100-135 (TLDE…SLIR), and 145-180 (GIKD…ENLL). Aspartate 77, aspartate 79, aspartate 81, tyrosine 83, glutamate 88, aspartate 113, asparagine 115, aspartate 117, tyrosine 119, glutamate 124, aspartate 158, aspartate 160, aspartate 162, arginine 164, and aspartate 169 together coordinate Ca(2+).

In terms of assembly, component of the outer dynein arm-docking complex along with ODAD1, ODAD2, ODAD3 and ODAD4.

It is found in the cytoplasm. The protein localises to the cytoskeleton. The protein resides in the cilium axoneme. It localises to the cell projection. Its subcellular location is the cilium. It is found in the flagellum. Component of the outer dynein arm-docking complex (ODA-DC) that mediates outer dynein arms (ODA) binding onto the doublet microtubule. Seems to regulate the assembly of both ODAs and their axonemal docking complex onto ciliary microtubules. Regulates ciliary and flagellar motility and is required for cilia-driven determination of body laterality. Functionally, regulates ciliary motility and is required for cilia-driven determination of body laterality. The polypeptide is Calaxin (clxn) (Danio rerio (Zebrafish)).